The primary structure comprises 168 residues: Cell division inhibitor SulA (168 aa).

Residues 106–112 (ALLTGNY) are ftsZ binding. Residues 161 to 168 (KIHSYLYH) are lon protease binding.

Belongs to the SulA family. In terms of assembly, interacts with FtsZ. In terms of processing, is rapidly cleaved and degraded by the Lon protease once DNA damage is repaired.

Its function is as follows. Component of the SOS system and an inhibitor of cell division. Accumulation of SulA causes rapid cessation of cell division and the appearance of long, non-septate filaments. In the presence of GTP, binds a polymerization-competent form of FtsZ in a 1:1 ratio, thus inhibiting FtsZ polymerization and therefore preventing it from participating in the assembly of the Z ring. This mechanism prevents the premature segregation of damaged DNA to daughter cells during cell division. The protein is Cell division inhibitor SulA of Yersinia pseudotuberculosis serotype O:1b (strain IP 31758).